Reading from the N-terminus, the 156-residue chain is Ribonuclease pancreatic (156 aa).

An N-terminal signal peptide occupies residues 1 to 28 (MALEKSLVLLPLFVLMLLVLGWVQPSLG). K35 and R38 together coordinate substrate. H40 serves as the catalytic Proton acceptor. N-linked (GlcNAc...) asparagine glycosylation is found at N50 and N62. Disulfide bonds link C54/C112, C68/C123, C86/C138, and C93/C100. Substrate contacts are provided by residues 69–73 (KPVNT) and K94. N104 carries an N-linked (GlcNAc...) asparagine glycan. Residue R113 coordinates substrate. The N-linked (GlcNAc...) asparagine glycan is linked to N116. The Proton donor role is filled by H147.

It belongs to the pancreatic ribonuclease family. As to quaternary structure, monomer. Interacts with and forms tight 1:1 complexes with RNH1. Dimerization of two such complexes may occur. Interaction with RNH1 inhibits this protein.

The protein resides in the secreted. It carries out the reaction an [RNA] containing cytidine + H2O = an [RNA]-3'-cytidine-3'-phosphate + a 5'-hydroxy-ribonucleotide-3'-[RNA].. The enzyme catalyses an [RNA] containing uridine + H2O = an [RNA]-3'-uridine-3'-phosphate + a 5'-hydroxy-ribonucleotide-3'-[RNA].. Endonuclease that catalyzes the cleavage of RNA on the 3' side of pyrimidine nucleotides. Acts on single-stranded and double-stranded RNA. The chain is Ribonuclease pancreatic (RNASE1) from Nomascus leucogenys (Northern white-cheeked gibbon).